The following is a 668-amino-acid chain: Threonine--tRNA ligase (668 aa).

In terms of domain architecture, TGS spans 1 to 64; that stretch reads MSQSVSLTFP…TDGKIEIITR (64 aa). A catalytic region spans residues 245-553; sequence DHRKLGREMD…LIENFAGHMP (309 aa). Residues cysteine 347, histidine 398, and histidine 530 each contribute to the Zn(2+) site.

It belongs to the class-II aminoacyl-tRNA synthetase family. Homodimer. Zn(2+) is required as a cofactor.

The protein resides in the cytoplasm. The enzyme catalyses tRNA(Thr) + L-threonine + ATP = L-threonyl-tRNA(Thr) + AMP + diphosphate + H(+). In terms of biological role, catalyzes the attachment of threonine to tRNA(Thr) in a two-step reaction: L-threonine is first activated by ATP to form Thr-AMP and then transferred to the acceptor end of tRNA(Thr). Also edits incorrectly charged L-seryl-tRNA(Thr). This is Threonine--tRNA ligase from Rhizobium etli (strain ATCC 51251 / DSM 11541 / JCM 21823 / NBRC 15573 / CFN 42).